The primary structure comprises 309 residues: Putative HTH-type transcriptional regulatory protein AF_1787 (309 aa).

Residues isoleucine 131–isoleucine 185 enclose the HTH cro/C1-type domain. A DNA-binding region (H-T-H motif) is located at residues valine 142–glutamate 161.

This Archaeoglobus fulgidus (strain ATCC 49558 / DSM 4304 / JCM 9628 / NBRC 100126 / VC-16) protein is Putative HTH-type transcriptional regulatory protein AF_1787.